Reading from the N-terminus, the 200-residue chain is dTDP-4-dehydrorhamnose 3,5-epimerase (200 aa).

Substrate-binding positions include Arg21, Glu26, 45 to 47, and Arg57; that span reads QVN. His60 acts as the Proton acceptor in catalysis. Substrate is bound by residues Lys70 and His116. The active-site Proton donor is the Tyr129. 2 residues coordinate substrate: Glu140 and Lys165.

It belongs to the dTDP-4-dehydrorhamnose 3,5-epimerase family.

It catalyses the reaction dTDP-4-dehydro-6-deoxy-alpha-D-glucose = dTDP-4-dehydro-beta-L-rhamnose. Its pathway is carbohydrate biosynthesis; dTDP-L-rhamnose biosynthesis. The protein operates within antibiotic biosynthesis; streptomycin biosynthesis. Its function is as follows. Involved in the biosynthesis of the dihydrostreptose moiety of streptomycin. Catalyzes the epimerization of the C3' and C5'positions of dTDP-6-deoxy-D-xylo-4-hexulose, forming dTDP-6-deoxy-L-lyxo-4-hexulose. The protein is dTDP-4-dehydrorhamnose 3,5-epimerase of Streptomyces griseus.